Here is a 155-residue protein sequence, read N- to C-terminus: Endoribonuclease YbeY (155 aa).

Zn(2+) is bound by residues H114, H118, and H124.

It belongs to the endoribonuclease YbeY family. The cofactor is Zn(2+).

It localises to the cytoplasm. Single strand-specific metallo-endoribonuclease involved in late-stage 70S ribosome quality control and in maturation of the 3' terminus of the 16S rRNA. This chain is Endoribonuclease YbeY, found in Enterobacter sp. (strain 638).